A 619-amino-acid chain; its full sequence is Frizzled and smoothened-like protein L (619 aa).

The N-terminal stretch at M1–C24 is a signal peptide. N-linked (GlcNAc...) asparagine glycans are attached at residues N4, N63, N112, N143, N159, N184, and N203. Residues Q25–S245 lie on the Extracellular side of the membrane. The FZ domain occupies D31 to N169. Disulfide bonds link C36–C106 and C48–C99. Residues N246 to L266 traverse the membrane as a helical segment. Topologically, residues N267–S278 are cytoplasmic. The chain crosses the membrane as a helical span at residues L279–G299. The Extracellular segment spans residues P300 to A321. A helical transmembrane segment spans residues T322–F342. Topologically, residues E343–K358 are cytoplasmic. The helical transmembrane segment at K359 to T379 threads the bilayer. Topologically, residues K380–L402 are extracellular. The helical transmembrane segment at F403–F423 threads the bilayer. The Cytoplasmic portion of the chain corresponds to E424 to S444. A helical transmembrane segment spans residues I445–M465. Over N466–S497 the chain is Extracellular. The chain crosses the membrane as a helical span at residues I498–L518. Residues Q519–S619 lie on the Cytoplasmic side of the membrane. The segment at L581 to S605 is disordered.

The protein belongs to the G-protein coupled receptor Fz/Smo family.

It localises to the membrane. The polypeptide is Frizzled and smoothened-like protein L (fslL) (Dictyostelium discoideum (Social amoeba)).